The sequence spans 429 residues: Serine hydroxymethyltransferase (429 aa).

Residues Leu125 and 129 to 131 each bind (6S)-5,6,7,8-tetrahydrofolate; that span reads GHL. Lys234 is modified (N6-(pyridoxal phosphate)lysine).

Belongs to the SHMT family. Homodimer. Requires pyridoxal 5'-phosphate as cofactor.

The protein localises to the cytoplasm. The enzyme catalyses (6R)-5,10-methylene-5,6,7,8-tetrahydrofolate + glycine + H2O = (6S)-5,6,7,8-tetrahydrofolate + L-serine. It participates in one-carbon metabolism; tetrahydrofolate interconversion. Its pathway is amino-acid biosynthesis; glycine biosynthesis; glycine from L-serine: step 1/1. Functionally, catalyzes the reversible interconversion of serine and glycine with tetrahydrofolate (THF) serving as the one-carbon carrier. This reaction serves as the major source of one-carbon groups required for the biosynthesis of purines, thymidylate, methionine, and other important biomolecules. Also exhibits THF-independent aldolase activity toward beta-hydroxyamino acids, producing glycine and aldehydes, via a retro-aldol mechanism. The sequence is that of Serine hydroxymethyltransferase from Allorhizobium ampelinum (strain ATCC BAA-846 / DSM 112012 / S4) (Agrobacterium vitis (strain S4)).